Reading from the N-terminus, the 140-residue chain is Transcription antitermination protein NusB (140 aa).

This sequence belongs to the NusB family.

Its function is as follows. Involved in transcription antitermination. Required for transcription of ribosomal RNA (rRNA) genes. Binds specifically to the boxA antiterminator sequence of the ribosomal RNA (rrn) operons. This chain is Transcription antitermination protein NusB, found in Leptospira biflexa serovar Patoc (strain Patoc 1 / Ames).